We begin with the raw amino-acid sequence, 128 residues long: uncharacterized protein (128 aa).

The 126-residue stretch at 1–126 folds into the VOC domain; it reads MHHIELYVSD…DRIKVELVAP (126 aa).

This is an uncharacterized protein from Bacillus subtilis (strain 168).